We begin with the raw amino-acid sequence, 64 residues long: Cytotoxin homolog S4C8 (64 aa).

Disulfide bonds link C3/C22, C15/C40, C44/C56, and C57/C62.

Belongs to the three-finger toxin family. Short-chain subfamily. Orphan group XIII sub-subfamily. Expressed by the venom gland.

The protein localises to the secreted. This is Cytotoxin homolog S4C8 from Aspidelaps scutatus (Shield-nose snake).